Consider the following 428-residue polypeptide: MSAIVDIFAREILDSRGNPTVECDVLLESGVMGRAAVPSGASTGQKEALELRDGDKSRYSGKGVLKAVEHVNNQIAQALIGIDANEQSYIDQIMIELDGTENKGNLGANATLAVSMAVARAAAEDSGLPLYRYLGGAGPMSLPVPMMNVINGGEHANNSLNIQEFMIMPVGAKSFREALRCGAEIFHALKKLCDSKGFPTTVGDEGGFAPNLNSHKEALQLMVEATEAAGYKAGEDVLFALDCASSEFYKDGKYHLEAEGRSYTNAEFAEYLESLVNEFPIISIEDGMDENDWEGWKLLTEKLGGKVQLVGDDLFVTNPKILAEGIEKGVANALLVKVNQIGTLSETLKAVDLAKRNRYASVMSHRSGETEDSTIADLAVATNCMQIKTGSLSRSDRMAKYNQLLRIEEELAEAADYPGKAAFYQLGK.

Gln163 is a binding site for (2R)-2-phosphoglycerate. Glu205 functions as the Proton donor in the catalytic mechanism. Mg(2+) is bound by residues Asp242, Glu285, and Asp312. 4 residues coordinate (2R)-2-phosphoglycerate: Lys337, Arg366, Ser367, and Lys388. Lys337 serves as the catalytic Proton acceptor.

This sequence belongs to the enolase family. Requires Mg(2+) as cofactor.

It localises to the cytoplasm. Its subcellular location is the secreted. The protein localises to the cell surface. The enzyme catalyses (2R)-2-phosphoglycerate = phosphoenolpyruvate + H2O. The protein operates within carbohydrate degradation; glycolysis; pyruvate from D-glyceraldehyde 3-phosphate: step 4/5. Its function is as follows. Catalyzes the reversible conversion of 2-phosphoglycerate (2-PG) into phosphoenolpyruvate (PEP). It is essential for the degradation of carbohydrates via glycolysis. The polypeptide is Enolase (Neisseria meningitidis serogroup C (strain 053442)).